The chain runs to 259 residues: MLTIADTTFSSHLIMGTGGATSHEALERALVASGTELTTVAMRRHAGTRGGESIFDLLRRLDIAPLPNTAGCRTAREAVLTARMAREALGTTWVKVEVIADEHTLLPDVVETLDATELLAAEGFTVLAYTSDDPVAAQRLEDAGAAAVMPLGAPIGTGLGILNPHNLELICSRASVPVLVDAGIGTASDAALAMELGCSGVLLASAVNRCQNPEAMATAMRHAVEAGRLARSAGRIPEREHAQASSTFEGLASWADQVL.

Lys95 acts as the Schiff-base intermediate with DXP in catalysis. 1-deoxy-D-xylulose 5-phosphate contacts are provided by residues Gly156, 182–183 (AG), and 204–205 (AS).

This sequence belongs to the ThiG family. As to quaternary structure, homotetramer. Forms heterodimers with either ThiH or ThiS.

Its subcellular location is the cytoplasm. It catalyses the reaction [ThiS sulfur-carrier protein]-C-terminal-Gly-aminoethanethioate + 2-iminoacetate + 1-deoxy-D-xylulose 5-phosphate = [ThiS sulfur-carrier protein]-C-terminal Gly-Gly + 2-[(2R,5Z)-2-carboxy-4-methylthiazol-5(2H)-ylidene]ethyl phosphate + 2 H2O + H(+). It functions in the pathway cofactor biosynthesis; thiamine diphosphate biosynthesis. Its function is as follows. Catalyzes the rearrangement of 1-deoxy-D-xylulose 5-phosphate (DXP) to produce the thiazole phosphate moiety of thiamine. Sulfur is provided by the thiocarboxylate moiety of the carrier protein ThiS. In vitro, sulfur can be provided by H(2)S. This Corynebacterium aurimucosum (strain ATCC 700975 / DSM 44827 / CIP 107346 / CN-1) (Corynebacterium nigricans) protein is Thiazole synthase.